Consider the following 92-residue polypeptide: Small ribosomal subunit protein uS19 (92 aa).

It belongs to the universal ribosomal protein uS19 family.

Protein S19 forms a complex with S13 that binds strongly to the 16S ribosomal RNA. The chain is Small ribosomal subunit protein uS19 from Macrococcus caseolyticus (strain JCSC5402) (Macrococcoides caseolyticum).